Here is an 89-residue protein sequence, read N- to C-terminus: UPF0147 protein Saci_0891 (89 aa).

The protein belongs to the UPF0147 family.

The protein is UPF0147 protein Saci_0891 of Sulfolobus acidocaldarius (strain ATCC 33909 / DSM 639 / JCM 8929 / NBRC 15157 / NCIMB 11770).